We begin with the raw amino-acid sequence, 318 residues long: WRKY transcription factor 28 (318 aa).

Composition is skewed to polar residues over residues 74–84 and 106–115; these read SSEVFNSSIDQ and RVSPSNSSSS. The tract at residues 74-158 is disordered; it reads SSEVFNSSID…KTEVKKQREP (85 aa). 2 stretches are compositionally biased toward basic and acidic residues: residues 116 to 126 and 148 to 158; these read EADHPGEDSGK and KKTEVKKQREP. Residues 166-231 constitute a DNA-binding region (WRKY); it reads SEVDHLEDGY…YEGQHNHPIP (66 aa).

It belongs to the WRKY group II-c family.

The protein resides in the nucleus. Its function is as follows. Transcription factor. Interacts specifically with the W box (5'-(T)TGAC[CT]-3'), a frequently occurring elicitor-responsive cis-acting element. This chain is WRKY transcription factor 28 (WRKY28), found in Arabidopsis thaliana (Mouse-ear cress).